A 262-amino-acid polypeptide reads, in one-letter code: Light-harvesting complex-like protein 3 isotype 1, chloroplastic (262 aa).

The transit peptide at 1–39 (MALFSPPISSSSLQNPNFIPKFSFSLLSSNRFSLLSVTR) directs the protein to the chloroplast. A run of 2 helical transmembrane segments spans residues 180–200 (AAMI…VGLV) and 202–222 (QMGN…VLFI).

As to quaternary structure, interacts with GGR. Forms homodimer, and heterodimer with LIL3.2. In terms of tissue distribution, expressed in photosynthetically active tissues (at protein level).

It localises to the plastid. It is found in the chloroplast thylakoid membrane. Light-harvesting-like protein required for biosynthesis of phytylated chlorophylls and alpha-tocopherol in green seedlings. Functions by anchoring geranylgeranyl reductase (GGR) in the thylakoid membrane, leading to the stabilization of GGR activity. Binds chlorophyll a in the thylakoid membrane. Plays a role in the regulation of chlorophyll biosynthesis under light stress and under standard growth conditions. The chain is Light-harvesting complex-like protein 3 isotype 1, chloroplastic (LIL3.1) from Arabidopsis thaliana (Mouse-ear cress).